The primary structure comprises 205 residues: Adenylyl-sulfate kinase (205 aa).

31–38 (GLSGAGKS) contacts ATP. The active-site Phosphoserine intermediate is the serine 105.

The protein belongs to the APS kinase family.

It carries out the reaction adenosine 5'-phosphosulfate + ATP = 3'-phosphoadenylyl sulfate + ADP + H(+). The protein operates within sulfur metabolism; hydrogen sulfide biosynthesis; sulfite from sulfate: step 2/3. Its function is as follows. Catalyzes the synthesis of activated sulfate. The polypeptide is Adenylyl-sulfate kinase (Shewanella sp. (strain MR-7)).